A 328-amino-acid polypeptide reads, in one-letter code: MANSDSPEQNENHCSAINSSIPLTPGSLPTLTLSGKIRVTVTFFLFLLSTIFNTSFLLKLQNWTQRKEKRKKLSRMKLLLKHLTLANLLETLIVMPLDGMWNITVQWYAGELLCKVLSYLKLFSMYAPAFMMVVISLDRSLAITKPLAVKSNSKLGQFMIGLAWLLSSIFAGPQLYIFGMIHLADDSGQTEGFSQCVTHCSFPQWWHQAFYNFFTFSCLFIIPLLIMVICNAKIIFTLTRVLHQDPHKLQLNQSKNNIPRARLRTLKMTVAFATSFTVCWTPYYVLGIWYWFDPDMVNRVSDPVNHFFFLFAFLNPCFDPLIYGYFSL.

Over 1 to 38 the chain is Extracellular; that stretch reads MANSDSPEQNENHCSAINSSIPLTPGSLPTLTLSGKIR. The N-linked (GlcNAc...) asparagine glycan is linked to Asn18. Residues 39 to 58 form a helical membrane-spanning segment; it reads VTVTFFLFLLSTIFNTSFLL. At 59 to 77 the chain is on the cytoplasmic side; it reads KLQNWTQRKEKRKKLSRMK. Residues 78 to 97 form a helical membrane-spanning segment; sequence LLLKHLTLANLLETLIVMPL. Residues 98-115 lie on the Extracellular side of the membrane; it reads DGMWNITVQWYAGELLCK. Asn102 is a glycosylation site (N-linked (GlcNAc...) asparagine). Cys114 and Cys196 form a disulfide bridge. A helical membrane pass occupies residues 116 to 137; the sequence is VLSYLKLFSMYAPAFMMVVISL. Residues 138-164 lie on the Cytoplasmic side of the membrane; that stretch reads DRSLAITKPLAVKSNSKLGQFMIGLAW. The helical transmembrane segment at 165-184 threads the bilayer; that stretch reads LLSSIFAGPQLYIFGMIHLA. Residues 185 to 212 lie on the Extracellular side of the membrane; it reads DDSGQTEGFSQCVTHCSFPQWWHQAFYN. Residues 213–232 traverse the membrane as a helical segment; sequence FFTFSCLFIIPLLIMVICNA. The Cytoplasmic segment spans residues 233 to 281; that stretch reads KIIFTLTRVLHQDPHKLQLNQSKNNIPRARLRTLKMTVAFATSFTVCWT. Residues 282–300 form a helical membrane-spanning segment; sequence PYYVLGIWYWFDPDMVNRV. Residues 301-306 lie on the Extracellular side of the membrane; the sequence is SDPVNH. A helical transmembrane segment spans residues 307–326; the sequence is FFFLFAFLNPCFDPLIYGYF. The Cytoplasmic segment spans residues 327-328; sequence SL.

This sequence belongs to the G-protein coupled receptor 1 family.

It localises to the cell membrane. Receptor for gonadotropin releasing hormone (GnRH) that mediates the action of GnRH to stimulate the secretion of the gonadotropic hormones luteinizing hormone (LH) and follicle-stimulating hormone (FSH). This receptor mediates its action by association with G-proteins that activate a phosphatidylinositol-calcium second messenger system. In Bos taurus (Bovine), this protein is Gonadotropin-releasing hormone receptor (GNRHR).